The chain runs to 444 residues: Trigger factor (444 aa).

Residues 163–248 form the PPIase FKBP-type domain; sequence GDFLTVDFVG…AKALKKAVAP (86 aa).

The protein belongs to the FKBP-type PPIase family. Tig subfamily.

It is found in the cytoplasm. The catalysed reaction is [protein]-peptidylproline (omega=180) = [protein]-peptidylproline (omega=0). Functionally, involved in protein export. Acts as a chaperone by maintaining the newly synthesized protein in an open conformation. Functions as a peptidyl-prolyl cis-trans isomerase. The chain is Trigger factor from Granulibacter bethesdensis (strain ATCC BAA-1260 / CGDNIH1).